The sequence spans 449 residues: NADH-quinone oxidoreductase subunit H (449 aa).

9 consecutive transmembrane segments (helical) span residues 23–43 (WWVI…LTLF), 93–113 (AVYL…FSVI), 137–157 (VAVL…VLGG), 176–196 (MISY…YAGS), 209–229 (LWYG…MVGE), 258–280 (ALFF…TLFL), 300–320 (YWPL…FIWL), 332–352 (FMAF…VAVA), and 368–388 (LLIG…IGGA). A compositionally biased stretch (polar residues) spans 427–442 (RSSPIASSMPQPSAAT). The tract at residues 427 to 449 (RSSPIASSMPQPSAATRSAGEEI) is disordered.

It belongs to the complex I subunit 1 family. NDH-1 is composed of 14 different subunits. Subunits NuoA, H, J, K, L, M, N constitute the membrane sector of the complex.

It localises to the cell membrane. It carries out the reaction a quinone + NADH + 5 H(+)(in) = a quinol + NAD(+) + 4 H(+)(out). Functionally, NDH-1 shuttles electrons from NADH, via FMN and iron-sulfur (Fe-S) centers, to quinones in the respiratory chain. The immediate electron acceptor for the enzyme in this species is believed to be ubiquinone. Couples the redox reaction to proton translocation (for every two electrons transferred, four hydrogen ions are translocated across the cytoplasmic membrane), and thus conserves the redox energy in a proton gradient. This subunit may bind ubiquinone. The protein is NADH-quinone oxidoreductase subunit H of Nocardioides sp. (strain ATCC BAA-499 / JS614).